The chain runs to 387 residues: GDP-mannose transporter (387 aa).

Basic and acidic residues predominate over residues 1-25 (MADTKKNDNYAIDMDKLDAESDRFR). Over 1–42 (MADTKKNDNYAIDMDKLDAESDRFRPPPQPQPRHSSSSHSQS) the chain is Cytoplasmic. Residues 1-45 (MADTKKNDNYAIDMDKLDAESDRFRPPPQPQPRHSSSSHSQSISN) form a disordered region. Positions 32–45 (PRHSSSSHSQSISN) are enriched in low complexity. Residues 43–63 (ISNSPVLPILSYCASSILMTV) form a helical membrane-spanning segment. The Lumenal portion of the chain corresponds to 64–71 (TNKYVLSG). Residues 72-92 (VQFNLNFFLLCVQSVVCIIAI) form a helical membrane-spanning segment. Residues 93–112 (QTCKSMGLINYRDFNSDEAK) lie on the Cytoplasmic side of the membrane. The helical transmembrane segment at 113–129 (KWFPISLLLIGMIYTGT) threads the bilayer. Topologically, residues 130-136 (KALKFLS) are lumenal. The chain crosses the membrane as a helical span at residues 137 to 153 (IPVYTIFKNLTIILIAY). At 154–162 (GEVLWFGGS) the chain is on the cytoplasmic side. The helical transmembrane segment at 163–184 (VTGMALFSFGLMVLSSVIAAWA) threads the bilayer. Residues 185-206 (DIKHALDTSGFSGAEATSKIST) are Lumenal-facing. A helical transmembrane segment spans residues 207–227 (LNAGYIWMLINCLCTSTYILG). Residues 228–241 (MRKRIKLTNFKDFD) are Cytoplasmic-facing. A helical transmembrane segment spans residues 242–262 (TMFYNNLLSIPILMIGSFIVE). Residues 263 to 280 (DWSSENINKNFPIETRNS) lie on the Lumenal side of the membrane. The chain crosses the membrane as a helical span at residues 281 to 301 (LIFAMIFSGLSSVFISYTSAW). Topologically, residues 302–309 (CVRVTSST) are cytoplasmic. The helical transmembrane segment at 310 to 329 (TYSMVGALNKLPIALSGLIF) threads the bilayer. Residues 330–332 (FGD) are Lumenal-facing. A helical membrane pass occupies residues 333–355 (PVTVPSVSAIVVGFISGIVYSLA). The Cytoplasmic portion of the chain corresponds to 356-387 (KVKQNAKPRTGVLPTTNPVSASTQSMRDGLKS). Positions 366 to 387 (GVLPTTNPVSASTQSMRDGLKS) are disordered. Over residues 368–381 (LPTTNPVSASTQSM) the composition is skewed to polar residues.

Belongs to the TPT transporter family. SLC35D subfamily. Homooligomer.

The protein localises to the golgi apparatus membrane. It is found in the cytoplasmic vesicle membrane. The protein resides in the endoplasmic reticulum membrane. Its function is as follows. Involved in the import of GDP-mannose from the cytoplasm into the Golgi lumen. The protein is GDP-mannose transporter (VRG4) of Coccidioides immitis (strain RS) (Valley fever fungus).